The sequence spans 302 residues: NAD kinase 2 (302 aa).

The Proton acceptor role is filled by Asp78. Residues 78 to 79 (DG), 152 to 153 (NE), Asp182, 193 to 198 (TAYSLS), and Ala217 contribute to the NAD(+) site.

The protein belongs to the NAD kinase family. The cofactor is a divalent metal cation.

It is found in the cytoplasm. It catalyses the reaction NAD(+) + ATP = ADP + NADP(+) + H(+). Involved in the regulation of the intracellular balance of NAD and NADP, and is a key enzyme in the biosynthesis of NADP. Catalyzes specifically the phosphorylation on 2'-hydroxyl of the adenosine moiety of NAD to yield NADP. This is NAD kinase 2 from Prochlorococcus marinus (strain SARG / CCMP1375 / SS120).